Consider the following 895-residue polypeptide: MRMSVGSAVPLPLWGRTFLLLLSVAVTQSHWPSEPSEAVRDWENQLEASMHSALSDLHETVPTVVGIPDGTAVVGRSFRVTIPTDLIASNGEVIKVSAAGKEALPSWLHWDPQSHTLEGLPLDTDKGVHYISVSAARLGANGSHVPQTSSVFSIEVYPEDHSEPQSLRAASPDPGEVVSLVCAADEPVTVLTVILDADLTKMTPKQRIDLLRRMRGFSEVEPHNMKLVPVVNNRLFDMSAFMAGPGNAKKVVENGALLSWKLGCCLNQNSVPDIRGVEVPAREGAMSAQLGYPVVGWHIANKKPSLPKRIRRQIHATPTPVTAIGPPTTAIQEPPSRIVPTPTSPAIAPPTETMAPPVRDPVPGKPTVTIRTRGAIIQTPTLGPIQPTRVSEAGTTVPSQIRPTMTIPGYMEPSTVTTPPTTTTKKPRVSTPRPATPSTDSSTTTTRRPTKKPRTSRPVPRVTTKAPITRLETASPATRMRTTTSGVPHGGEPNQRPELKNHIDRVDAWVGTYFEVKIPSDTFYDNEDTTTDKLKLTLKLREQQLVGEKSWVQFNSNSQLMYGLPDSSHVGKHEYFMHATDKGGLSAVDAFEIHVHRRPQGDKAPARFKAKLTGDPAAVTNDIHKKIALVKKLAFAFGDRNCSTITLQNITRGSIVVEWTNNTLPLEPCPKEQITALSRRIAEDDGKPRGAFVNALEPDFQAMSITVTGSGSCRHLQFVPVAPPMRVPSEAPATEVPDRDPEKSSEDDVYLHTVIPAVVVAAILLIAGIIAMICYRKKRKGKLTLEDQATFIKKGVPIIFADELDDSKPPPSSSMPLILQEEKAPLPPPEYPNQSMPETTPLNQDTVGEYAPLRDEDPSAPPYQPPPPFTAPMEGKGSRPKNMTPYRSPPPYVPP.

The N-terminal stretch at 1–29 is a signal peptide; that stretch reads MRMSVGSAVPLPLWGRTFLLLLSVAVTQS. The interval 30–408 is required for laminin recognition; it reads HWPSEPSEAV…SQIRPTMTIP (379 aa). The interval 49 to 71 is O-glycosylated at one site; it reads SMHSALSDLHETVPTVVGIPDGT. An N-linked (GlcNAc...) asparagine glycan is attached at asparagine 141. Cysteine 182 and cysteine 264 are disulfide-bonded. The mucin-like domain stretch occupies residues 316–485; it reads ATPTPVTAIG…PATRMRTTTS (170 aa). O-linked (Man6P...) threonine glycans are attached at residues threonine 317, threonine 319, and threonine 379. A disordered region spans residues 381-500; sequence TLGPIQPTRV…GEPNQRPELK (120 aa). The span at 393-403 shows a compositional bias: polar residues; that stretch reads AGTTVPSQIRP. Over residues 413-447 the composition is skewed to low complexity; the sequence is PSTVTTPPTTTTKKPRVSTPRPATPSTDSSTTTTR. Residues 463-485 are O-glycosylated at seven sites with GalNAc; the sequence is TTKAPITRLETASPATRMRTTTS. One can recognise a Peptidase S72 domain in the interval 603–712; sequence KAPARFKAKL…MSITVTGSGS (110 aa). 3 N-linked (GlcNAc...) asparagine glycosylation sites follow: asparagine 641, asparagine 649, and asparagine 661. The Extracellular segment spans residues 654-749; the sequence is SIVVEWTNNT…DPEKSSEDDV (96 aa). Cysteine 669 and cysteine 713 are oxidised to a cystine. The tract at residues 724 to 747 is disordered; that stretch reads PMRVPSEAPATEVPDRDPEKSSED. The segment covering 736 to 747 has biased composition (basic and acidic residues); the sequence is VPDRDPEKSSED. A helical membrane pass occupies residues 750–775; it reads YLHTVIPAVVVAAILLIAGIIAMICY. Residues 776–782 carry the Nuclear localization signal motif; that stretch reads RKKRKGK. Residues 776–895 are Cytoplasmic-facing; that stretch reads RKKRKGKLTL…YRSPPPYVPP (120 aa). Threonine 790 is modified (phosphothreonine). The tract at residues 819–895 is required for interaction with CAV3; sequence LQEEKAPLPP…YRSPPPYVPP (77 aa). The tract at residues 823–895 is disordered; it reads KAPLPPPEYP…YRSPPPYVPP (73 aa). The span at 832–846 shows a compositional bias: polar residues; the sequence is PNQSMPETTPLNQDT. Pro residues predominate over residues 859–870; the sequence is SAPPYQPPPPFT. Residues 880–895 are required for binding DMD and UTRN; it reads PKNMTPYRSPPPYVPP. Residues 889-892 carry the PPXY motif motif; sequence PPPY. Tyrosine 892 carries the post-translational modification Phosphotyrosine; by SRC.

In terms of assembly, monomer. Heterodimer of alpha- and beta-dystroglycan subunits which are the central components of the dystrophin-glycoprotein complex. This complex then can form a dystrophin-associated glycoprotein complex (DGC) which is composed of three subcomplexes: a cytoplasmic complex comprised of DMD (or UTRN), DTNA and a number of syntrophins, such as SNTB1, SNTB2, SNTG1 and SNTG2, the transmembrane dystroglycan complex, and the sarcoglycan-sarcospan complex. Interacts (via the N-terminal of alphaDAG1) with LARGE1; the interaction enhances laminin binding. Interacts with SGCD. Interacts with AGR2 and AGR3. Interacts (betaDAG1) with DMD; the interaction is inhibited by phosphorylation on the PPXY motif. Interacts (betaDAG1, via its PPXY motif) with UTRN (via its WWW and ZZ domains); the interaction is inhibited by phosphorylation on the PPXY motif. Interacts (betaDAG1, via its phosphorylated PPXY motif) with the SH2 domain-containing proteins, FYN, CSK, NCK and SHC. Interacts (betaDAG1) with CAV3 (via a central WW-like domain); the interaction disrupts the binding of DMD. BetaDAG1 directly interacts with ANK3, but not with ANK2; this interaction does not interfere with DMD-binding and is required for retention at costameres. Identified in a dystroglycan complex that contains at least PRX, DRP2, UTRN, DMD and DAG1. Interacts with POMGNT1. BetaDAG1 interacts with CD93. Post-translationally, O-glycosylated. POMGNT1 catalyzes the initial addition of N-acetylglucosamine, giving rise to the GlcNAc(beta1-2)Man(alpha1-)O-Ser/Thr moiety and thus providing the necessary basis for the addition of further carbohydrate moieties. Heavily O-glycosylated comprising of up to two thirds of its mass and the carbohydrate composition differs depending on tissue type. Mucin-type O-glycosylation is important for ligand binding activity. O-mannosylation is found in high abundance in both brain and muscle where the most abundant glycan is Sia-alpha-2-3-Gal-beta-1-4-Glc-NAc-beta-1-2-Man. In muscle, glycosylation on Thr-317, Thr-319 and Thr-379 by a phosphorylated O-mannosyl glycan with the structure 2-(N-acetylamido)-2-deoxygalactosyl-beta-1,3-2-(N-acetylamido)-2-deoxyglucosyl-beta-1,4-6-phosphomannose is mediated by like-acetylglucosaminyltransferase (LARGE1) protein amd is required for laminin binding. O-glycosylated in the N-terminal region with a core 1 or possibly core 8 glycan. The brain form displays a unique glycosylation pattern which is absent in other tissues; this form shows enhanced binding to laminin LAMA5 compared to the skeletal muscle form. In terms of processing, N-glycosylated. Autolytic cleavage produces the alpha and beta subunits. In cutaneous cells, as well as in certain pathological conditions, shedding of beta-dystroglycan can occur releasing a peptide of about 30 kDa. Post-translationally, SRC-mediated phosphorylation of the PPXY motif of the beta subunit recruits SH2 domain-containing proteins, but inhibits binding to WWW domain-containing proteins, DMD and UTRN. This phosphorylation also inhibits nuclear entry. As to expression, expressed in brain (at protein level). Expressed in the myelin sheath of peripheral nerves.

It localises to the secreted. Its subcellular location is the extracellular space. It is found in the cell membrane. The protein resides in the cytoplasm. The protein localises to the cytoskeleton. It localises to the nucleus. Its subcellular location is the nucleoplasm. It is found in the sarcolemma. The protein resides in the postsynaptic cell membrane. Its function is as follows. The dystroglycan complex is involved in a number of processes including laminin and basement membrane assembly, sarcolemmal stability, cell survival, peripheral nerve myelination, nodal structure, cell migration, and epithelial polarization. Extracellular peripheral glycoprotein that acts as a receptor for extracellular matrix proteins containing laminin-G domains. Receptor for laminin-2 (LAMA2) and agrin in peripheral nerve Schwann cells. Also acts as a receptor for laminin LAMA5. In terms of biological role, transmembrane protein that plays important roles in connecting the extracellular matrix to the cytoskeleton. Acts as a cell adhesion receptor in both muscle and non-muscle tissues. Receptor for both DMD and UTRN and, through these interactions, scaffolds axin to the cytoskeleton. Also functions in cell adhesion-mediated signaling and implicated in cell polarity. The sequence is that of Dystroglycan 1 from Bos taurus (Bovine).